The primary structure comprises 111 residues: Cell division protein FtsB (111 aa).

Residues 1–3 (MRL) lie on the Cytoplasmic side of the membrane. The helical transmembrane segment at 4–21 (LFLVLLVLLGLIQYPLWL) threads the bilayer. The Periplasmic portion of the chain corresponds to 22 to 111 (GKGGWFKVWD…PGQTASAPRR (90 aa)). Residues 31-62 (DLQRQVAAQHETNDGLRARNAALEAEVRDLAT) are a coiled coil. Residues 88 to 111 (VPPGTPVPQPAPGAPGQTASAPRR) are disordered. The span at 90–100 (PGTPVPQPAPG) shows a compositional bias: pro residues. The span at 101–111 (APGQTASAPRR) shows a compositional bias: low complexity.

It belongs to the FtsB family. In terms of assembly, part of a complex composed of FtsB, FtsL and FtsQ.

Its subcellular location is the cell inner membrane. In terms of biological role, essential cell division protein. May link together the upstream cell division proteins, which are predominantly cytoplasmic, with the downstream cell division proteins, which are predominantly periplasmic. In Bordetella petrii (strain ATCC BAA-461 / DSM 12804 / CCUG 43448), this protein is Cell division protein FtsB.